The primary structure comprises 229 residues: Ribonuclease 3 (229 aa).

The region spanning 5 to 134 is the RNase III domain; sequence EQKLEQDFGI…FLGALYLDQG (130 aa). Glu-47 serves as a coordination point for Mg(2+). Asp-51 is an active-site residue. Mg(2+)-binding residues include Asp-120 and Glu-123. The active site involves Glu-123. The 70-residue stretch at 160–229 folds into the DRBM domain; the sequence is DYKTALQERL…AKSALEQLGN (70 aa).

Belongs to the ribonuclease III family. Homodimer. Requires Mg(2+) as cofactor.

It localises to the cytoplasm. It carries out the reaction Endonucleolytic cleavage to 5'-phosphomonoester.. Its function is as follows. Digests double-stranded RNA. Involved in the processing of primary rRNA transcript to yield the immediate precursors to the large and small rRNAs (23S and 16S). Also processes some mRNAs, and tRNAs when they are encoded in the rRNA operon. CRISPR (clustered regularly interspaced short palindromic repeat) is an adaptive immune system that provides protection against mobile genetic elements (viruses, transposable elements and conjugative plasmids). CRISPR clusters contain spacers, sequences complementary to antecedent mobile elements, and target invading nucleic acids. CRISPR clusters are transcribed and processed into CRISPR RNA (crRNA). In this organism endogenous ribonuclease 3 and Cas9 are required for correct coprocessing of pre-crRNA and the trans-encoded small RNA (tracrRNA). Cas9, crRNA and tracrRNA are required for cleavage of invading DNA. Complements pre-crRNA and tracRNA coprocessing defects in an rnc deletion in S.pyogenes strain 370. The sequence is that of Ribonuclease 3 from Streptococcus thermophilus (strain ATCC BAA-491 / LMD-9).